A 453-amino-acid polypeptide reads, in one-letter code: Cysteine--tRNA ligase (453 aa).

A Zn(2+)-binding site is contributed by cysteine 31. Residues 33–43 (PTVYDNPHIGN) carry the 'HIGH' region motif. 3 residues coordinate Zn(2+): cysteine 213, histidine 238, and glutamate 242. The short motif at 271–275 (KMAKS) is the 'KMSKS' region element. An ATP-binding site is contributed by lysine 274.

It belongs to the class-I aminoacyl-tRNA synthetase family. Monomer. Zn(2+) is required as a cofactor.

It is found in the cytoplasm. It catalyses the reaction tRNA(Cys) + L-cysteine + ATP = L-cysteinyl-tRNA(Cys) + AMP + diphosphate. The protein is Cysteine--tRNA ligase of Pelagibacter ubique (strain HTCC1062).